Consider the following 418-residue polypeptide: Gamma-glutamyl phosphate reductase (418 aa).

It belongs to the gamma-glutamyl phosphate reductase family.

It localises to the cytoplasm. It carries out the reaction L-glutamate 5-semialdehyde + phosphate + NADP(+) = L-glutamyl 5-phosphate + NADPH + H(+). Its pathway is amino-acid biosynthesis; L-proline biosynthesis; L-glutamate 5-semialdehyde from L-glutamate: step 2/2. Functionally, catalyzes the NADPH-dependent reduction of L-glutamate 5-phosphate into L-glutamate 5-semialdehyde and phosphate. The product spontaneously undergoes cyclization to form 1-pyrroline-5-carboxylate. This chain is Gamma-glutamyl phosphate reductase, found in Geotalea uraniireducens (strain Rf4) (Geobacter uraniireducens).